Reading from the N-terminus, the 347-residue chain is Oxygen sensor histidine kinase NreB (347 aa).

Cys-59, Cys-62, Cys-74, and Cys-77 together coordinate [4Fe-4S] cluster. The Histidine kinase domain maps to 153–347 (RISRELHDGI…IVTLEVPITD (195 aa)). At His-159 the chain carries Phosphohistidine; by autocatalysis.

The cofactor is [4Fe-4S] cluster. Autophosphorylated.

It localises to the cytoplasm. The enzyme catalyses ATP + protein L-histidine = ADP + protein N-phospho-L-histidine.. Its activity is regulated as follows. Activated by cysteine desulfurase, Fe(2+) ions and cysteine and inhibited by oxygen and ADP. In terms of biological role, member of the two-component regulatory system NreB/NreC involved in the control of dissimilatory nitrate/nitrite reduction in response to oxygen. NreB functions as a direct oxygen sensor histidine kinase which is autophosphorylated, in the absence of oxygen, probably at the conserved histidine residue, and transfers its phosphate group probably to a conserved aspartate residue of NreC. NreB/NreC activates the expression of the nitrate (narGHJI) and nitrite (nir) reductase operons, as well as the putative nitrate transporter gene narT. The polypeptide is Oxygen sensor histidine kinase NreB (nreB) (Staphylococcus carnosus (strain TM300)).